A 943-amino-acid chain; its full sequence is Mechanosensitive ion channel protein BA (943 aa).

A disordered region spans residues 1 to 67; it reads MPNPNDVTID…PPSSSLGFGH (67 aa). Residues 1-107 are Cytoplasmic-facing; that stretch reads MPNPNDVTID…AVLNFSTVTR (107 aa). Positions 14 to 37 are enriched in polar residues; it reads TSVSSRGQTGARNNSTNIPNSPSG. A helical transmembrane segment spans residues 108 to 130; that stretch reads YLIYIAPLAALLAIPIIVGATAA. Residues 131 to 149 are Lumenal-facing; that stretch reads EDAKIGGVSLPWFFCWVEV. The helical transmembrane segment at 150–175 threads the bilayer; sequence VWVSLWVCKLVAKVIPFVFQFVCGIV. Residues 176 to 195 are Cytoplasmic-facing; the sequence is SAGTRKYALILRNLEIPITM. A helical transmembrane segment spans residues 196 to 214; that stretch reads VLWMIVSLVTFLPIMVYNP. The Lumenal segment spans residues 215–233; sequence RNKREGDTETKSWEKSVKN. The helical transmembrane segment at 234-259 threads the bilayer; it reads VLFAFLVCALIFLGEKTLVQLISISY. Residues 260–468 are Cytoplasmic-facing; it reads HRKQFDARIK…DQAIHVLDNL (209 aa). The EF-hand domain maps to 412 to 447; sequence GKEAEAEECFTMLDRDGNGDISLDEIILAISEIGRT. Ca(2+) is bound by residues Asp-425, Asp-427, Asn-429, Asp-431, and Glu-436. Residues 469 to 489 traverse the membrane as a helical segment; the sequence is LATIAFIIAVLVFVSFVTSGF. At 490 to 502 the chain is on the lumenal side; the sequence is GTVIAAGATSLLS. Residues 503–523 traverse the membrane as a helical segment; it reads LSFVFATTAQEVLGSCIFLFV. At 524 to 943 the chain is on the cytoplasmic side; it reads KHPFDIGDRV…QRRNYESRRL (420 aa). Residues 677-943 are disordered; the sequence is PGAAAEDAAA…QRRNYESRRL (267 aa). Low complexity-rich tracts occupy residues 678–687 and 744–759; these read GAAAEDAAAA and GASATAATGNNSAGSA. A compositionally biased stretch (polar residues) spans 760-781; sequence YSETTLNNTVSEPYQRSFTPNT. Positions 798–810 are enriched in basic and acidic residues; sequence TERHLGVSHDSIA. The segment covering 827 to 842 has biased composition (polar residues); sequence TTANQSLASPTTMQSE. The segment covering 857–880 has biased composition (low complexity); it reads PSSSQYSQQYPQQQSQSPYSYTYS. Over residues 886 to 904 the composition is skewed to polar residues; it reads PESSLQPLEHTTSYNQSLP. The span at 916–943 shows a compositional bias: basic and acidic residues; it reads NSLEGHSPHVDPRHMTEEQRRNYESRRL.

It belongs to the MscS (TC 1.A.23) family.

It is found in the cell membrane. The enzyme catalyses Ca(2+)(in) = Ca(2+)(out). In terms of biological role, acts as a mechanosensitive calcium channel in response to membrane stretch. Regulates intracellular calcium levels and cell volume for survival in response to hypo-osmotic shock. Involved in maintaining vacuole integrity and protecting the nuclear envelope upon hypo-osmotic shock. seems to contribute to CaCl2 toxicityIn contracstz to mscA, mscB seems to contribute to CaCl(2) toxicity. The sequence is that of Mechanosensitive ion channel protein BA from Emericella nidulans (strain FGSC A4 / ATCC 38163 / CBS 112.46 / NRRL 194 / M139) (Aspergillus nidulans).